A 154-amino-acid chain; its full sequence is Putative pre-16S rRNA nuclease (154 aa).

It belongs to the YqgF nuclease family.

The protein resides in the cytoplasm. In terms of biological role, could be a nuclease involved in processing of the 5'-end of pre-16S rRNA. The protein is Putative pre-16S rRNA nuclease of Rickettsia africae (strain ESF-5).